A 604-amino-acid polypeptide reads, in one-letter code: Linalool synthase Tps-5042L13, chloroplastic (604 aa).

The N-terminal 34 residues, 1–34 (MSSMRIYVAIMKKPSVKHVDNVDKKASKPSWRVS), are a transit peptide targeting the chloroplast. (2E)-geranyl diphosphate-binding residues include Arg-323, Asp-360, Asp-364, Arg-501, and Asp-504. Mg(2+)-binding residues include Asp-360 and Asp-364. A DDXXD motif motif is present at residues 360-364 (DDVYD). Mg(2+) is bound by residues Asp-504, Thr-508, and Glu-512.

Belongs to the terpene synthase family. Tpsb subfamily. As to quaternary structure, monomer. Mg(2+) serves as cofactor. The cofactor is Mn(2+).

It localises to the plastid. Its subcellular location is the chloroplast. The catalysed reaction is (2E)-geranyl diphosphate + H2O = linalool + diphosphate. The protein operates within secondary metabolite biosynthesis; terpenoid biosynthesis. In terms of biological role, monoterpene synthase (mono-TPS) involved in the biosynthesis of monoterpenes natural products. Catalyzes the conversion of (2E)-geranyl diphosphate (GPP) into linalool. This is Linalool synthase Tps-5042L13, chloroplastic from Perilla frutescens (Beefsteak mint).